The sequence spans 43 residues: SPbeta prophage-derived uncharacterized protein YotD (43 aa).

In Bacillus subtilis (strain 168), this protein is SPbeta prophage-derived uncharacterized protein YotD (yotD).